Here is a 746-residue protein sequence, read N- to C-terminus: NAD(P)H-quinone oxidoreductase subunit 5, chloroplastic (746 aa).

A run of 16 helical transmembrane segments spans residues 9-29 (WIIP…LLLF), 40-60 (WAFP…DLSI), 89-109 (IDSL…LVLI), 121-140 (YLRF…GLVT), 147-167 (VYIF…FWFT), 185-205 (GDFG…SLEF), 219-239 (NEVN…GSVA), 258-278 (TPIS…FLVA), 280-300 (LLPL…IGII), 327-347 (LGYM…FHLI), 354-374 (ALLF…VGYS), 396-416 (MSFL…CFWS), 425-445 (WLYS…TAFY), 552-572 (LFSM…GISF), 606-626 (FFIN…IASF), and 726-746 (SYIF…YLFP).

The protein belongs to the complex I subunit 5 family. In terms of assembly, NDH is composed of at least 16 different subunits, 5 of which are encoded in the nucleus.

The protein localises to the plastid. The protein resides in the chloroplast thylakoid membrane. The catalysed reaction is a plastoquinone + NADH + (n+1) H(+)(in) = a plastoquinol + NAD(+) + n H(+)(out). The enzyme catalyses a plastoquinone + NADPH + (n+1) H(+)(in) = a plastoquinol + NADP(+) + n H(+)(out). NDH shuttles electrons from NAD(P)H:plastoquinone, via FMN and iron-sulfur (Fe-S) centers, to quinones in the photosynthetic chain and possibly in a chloroplast respiratory chain. The immediate electron acceptor for the enzyme in this species is believed to be plastoquinone. Couples the redox reaction to proton translocation, and thus conserves the redox energy in a proton gradient. This is NAD(P)H-quinone oxidoreductase subunit 5, chloroplastic (ndhF) from Vicia faba (Broad bean).